Consider the following 428-residue polypeptide: Elongation factor 1-alpha (428 aa).

Residues 5–215 enclose the tr-type G domain; sequence KPHVNIVFIG…ALDQIPEPPK (211 aa). Residues 14 to 21 are G1; sequence GHVDHGKS. 14 to 21 provides a ligand contact to GTP; sequence GHVDHGKS. Serine 21 contacts Mg(2+). Positions 68 to 72 are G2; that stretch reads GITID. A G3 region spans residues 89-92; the sequence is DAPG. GTP contacts are provided by residues 89 to 93 and 144 to 147; these read DAPGH and NKMD. A G4 region spans residues 144–147; the sequence is NKMD. Positions 181–183 are G5; the sequence is SAW.

This sequence belongs to the TRAFAC class translation factor GTPase superfamily. Classic translation factor GTPase family. EF-Tu/EF-1A subfamily.

It localises to the cytoplasm. The catalysed reaction is GTP + H2O = GDP + phosphate + H(+). Functionally, GTP hydrolase that promotes the GTP-dependent binding of aminoacyl-tRNA to the A-site of ribosomes during protein biosynthesis. The protein is Elongation factor 1-alpha of Thermococcus onnurineus (strain NA1).